The chain runs to 239 residues: tRNA (guanine-N(7)-)-methyltransferase (239 aa).

4 residues coordinate S-adenosyl-L-methionine: glutamate 69, glutamate 94, aspartate 121, and aspartate 144. Residue aspartate 144 is part of the active site. Lysine 148 serves as a coordination point for substrate. Residues 150–155 (RHNKRR) form an interaction with RNA region. Substrate-binding positions include aspartate 180 and 217-220 (TKFE).

Belongs to the class I-like SAM-binding methyltransferase superfamily. TrmB family. In terms of assembly, monomer.

It carries out the reaction guanosine(46) in tRNA + S-adenosyl-L-methionine = N(7)-methylguanosine(46) in tRNA + S-adenosyl-L-homocysteine. The protein operates within tRNA modification; N(7)-methylguanine-tRNA biosynthesis. Catalyzes the formation of N(7)-methylguanine at position 46 (m7G46) in tRNA. This chain is tRNA (guanine-N(7)-)-methyltransferase, found in Shigella boydii serotype 4 (strain Sb227).